Here is a 590-residue protein sequence, read N- to C-terminus: Bacillolysin (590 aa).

An N-terminal signal peptide occupies residues 1 to 24 (MKKVWFSLLGGAMLLGSVASGASA). The propeptide at 25-286 (ESSVSGPAQL…GSIVFQYDII (262 aa)) is activation peptide. Ca(2+) contacts are provided by Asp-339, Asp-341, and Asp-419. His-423 contributes to the Zn(2+) binding site. The active site involves Glu-424. Zn(2+) contacts are provided by His-427 and Glu-447. Residues Asp-466, Tyr-469, Thr-470, Ile-473, and Asp-476 each contribute to the Ca(2+) site. The active-site Proton donor is His-507.

The protein belongs to the peptidase M4 family. Ca(2+) serves as cofactor. Zn(2+) is required as a cofactor.

The protein localises to the secreted. It carries out the reaction Similar, but not identical, to that of thermolysin.. In terms of biological role, involved in the generation of beta- and alpha-amylases from the large amylase precursor. This chain is Bacillolysin (npr), found in Paenibacillus polymyxa (Bacillus polymyxa).